The following is a 331-amino-acid chain: Ketol-acid reductoisomerase (NADP(+)) (331 aa).

Residues 2-182 enclose the KARI N-terminal Rossmann domain; sequence ARMYYDEDAN…GGTRGGVLET (181 aa). Residues 25 to 28, Ser-51, Ser-53, and 83 to 86 contribute to the NADP(+) site; these read YGSQ and DEVQ. His-108 is an active-site residue. An NADP(+)-binding site is contributed by Gly-134. One can recognise a KARI C-terminal knotted domain in the interval 183–328; that stretch reads TFREETETDL…KDLRAMFSWL (146 aa). Mg(2+) is bound by residues Asp-191, Glu-195, Glu-227, and Glu-231. Ser-252 contributes to the substrate binding site.

Belongs to the ketol-acid reductoisomerase family. Mg(2+) serves as cofactor.

The catalysed reaction is (2R)-2,3-dihydroxy-3-methylbutanoate + NADP(+) = (2S)-2-acetolactate + NADPH + H(+). The enzyme catalyses (2R,3R)-2,3-dihydroxy-3-methylpentanoate + NADP(+) = (S)-2-ethyl-2-hydroxy-3-oxobutanoate + NADPH + H(+). It functions in the pathway amino-acid biosynthesis; L-isoleucine biosynthesis; L-isoleucine from 2-oxobutanoate: step 2/4. Its pathway is amino-acid biosynthesis; L-valine biosynthesis; L-valine from pyruvate: step 2/4. In terms of biological role, involved in the biosynthesis of branched-chain amino acids (BCAA). Catalyzes an alkyl-migration followed by a ketol-acid reduction of (S)-2-acetolactate (S2AL) to yield (R)-2,3-dihydroxy-isovalerate. In the isomerase reaction, S2AL is rearranged via a Mg-dependent methyl migration to produce 3-hydroxy-3-methyl-2-ketobutyrate (HMKB). In the reductase reaction, this 2-ketoacid undergoes a metal-dependent reduction by NADPH to yield (R)-2,3-dihydroxy-isovalerate. This Trichormus variabilis (strain ATCC 29413 / PCC 7937) (Anabaena variabilis) protein is Ketol-acid reductoisomerase (NADP(+)).